We begin with the raw amino-acid sequence, 203 residues long: Early nodulin-like protein 9 (203 aa).

An N-terminal signal peptide occupies residues 1–27 (MARNLKSMMLCGFGLLCFLMIVDRAYA). The Phytocyanin domain maps to 28–130 (REFTVGGATG…NEKLVVIVMA (103 aa)). A disulfide bridge links cysteine 84 with cysteine 118. N-linked (GlcNAc...) asparagine glycosylation occurs at asparagine 103. Residues 134–181 (GNKNTASSPPSPAPAPSGESAPSPPVSGTFEMTPAPTPTTSEDTPNSA) form a disordered region. Serine 180 is lipidated: GPI-anchor amidated serine. A propeptide spans 181 to 203 (AASSLSFVAALLGAALASTLFLH) (removed in mature form).

It belongs to the early nodulin-like (ENODL) family. Specifically observed at the plasma membrane of sieve elements in vascular tissues of leaves, stems, roots, flowers and reproductive organs. Absent from companion cells.

The protein resides in the cell membrane. May act as a carbohydrate transporter. Mainly required for reproductive functions. The chain is Early nodulin-like protein 9 from Arabidopsis thaliana (Mouse-ear cress).